The following is a 391-amino-acid chain: Pyridinium-3,5-bisthiocarboxylic acid mononucleotide nickel insertion protein (391 aa).

The protein belongs to the LarC family.

The catalysed reaction is Ni(II)-pyridinium-3,5-bisthiocarboxylate mononucleotide = pyridinium-3,5-bisthiocarboxylate mononucleotide + Ni(2+). Involved in the biosynthesis of a nickel-pincer cofactor ((SCS)Ni(II) pincer complex). Binds Ni(2+), and functions in nickel delivery to pyridinium-3,5-bisthiocarboxylic acid mononucleotide (P2TMN), to form the mature cofactor. Is thus probably required for the activation of nickel-pincer cofactor-dependent enzymes. The sequence is that of Pyridinium-3,5-bisthiocarboxylic acid mononucleotide nickel insertion protein from Staphylococcus saprophyticus subsp. saprophyticus (strain ATCC 15305 / DSM 20229 / NCIMB 8711 / NCTC 7292 / S-41).